A 121-amino-acid polypeptide reads, in one-letter code: MNTITHEEANTVQPPLFFTDSAASKVKELIEEEANQALKLRVFVSGGGCSGFQYGFTFDEIINEDDFVIEKQGVRLLVDSMSVQYLLGAEIDYQENAQGAQFVIKNPAAASTCGCGSSFSV.

The iron-sulfur cluster site is built by Cys49, Cys113, and Cys115.

The protein belongs to the HesB/IscA family. As to quaternary structure, homodimer. Requires iron-sulfur cluster as cofactor.

Required for insertion of 4Fe-4S clusters. This is Putative iron-sulfur cluster insertion protein ErpA from Nitrosomonas eutropha (strain DSM 101675 / C91 / Nm57).